The chain runs to 523 residues: Tryptophan 6-halogenase SttH (523 aa).

FAD contacts are provided by Gly14, Ser40, Ile43, Val46, Val48, and Ala51. Residue Lys79 is part of the active site. L-tryptophan is bound at residue Pro97. 2 residues coordinate FAD: Val203 and Leu354. The chloride site is built by Thr365 and Gly366. Ile367 contributes to the FAD binding site. Positions 456 and 457 each coordinate L-tryptophan.

The protein belongs to the flavin-dependent halogenase family. Bacterial tryptophan halogenase subfamily. As to quaternary structure, homodimer.

The enzyme catalyses L-tryptophan + FADH2 + chloride + O2 = 6-chloro-L-tryptophan + FAD + 2 H2O. It catalyses the reaction D-tryptophan + FADH2 + chloride + O2 = 6-chloro-D-tryptophan + FAD + 2 H2O. Catalyzes the chlorination of tryptophan (Trp) at C6 position to yield 6-chloro-tryptophan. Accepts both L and D-Trp as the substrates. The enzyme also uses bromide to yield 6-bromo-Trp. In vitro, can also catalyze the halogenation of 3-indolepropionic acid, N-methyltryptophan and non-indolic aromatic substrates such as kynurenine, anthranilamide and N-phenylanthranilic acid. This Streptomyces toxytricini (Actinomyces toxytricini) protein is Tryptophan 6-halogenase SttH.